A 42-amino-acid polypeptide reads, in one-letter code: Aspartate-semialdehyde dehydrogenase leader peptide (42 aa).

The polypeptide is Aspartate-semialdehyde dehydrogenase leader peptide (Streptococcus mutans serotype c (strain ATCC 700610 / UA159)).